The sequence spans 201 residues: Recombination protein RecR (201 aa).

The segment at 57-72 (CADCRTFTEQDVCNIC) adopts a C4-type zinc-finger fold. The Toprim domain occupies 81 to 176 (GQICVVESPA…EASRIAHGVP (96 aa)).

Belongs to the RecR family.

May play a role in DNA repair. It seems to be involved in an RecBC-independent recombinational process of DNA repair. It may act with RecF and RecO. In Salmonella choleraesuis (strain SC-B67), this protein is Recombination protein RecR.